The primary structure comprises 435 residues: MKPTVAIVGRPNVGKSTLFNRILNKRVAIVDDVPGVTRDRNFSEAEWCGKQFSLIDTGGYSRTGDTFSAAVLEQSLIALQEANIIILVVDLRTGITDIDLEITELLRKQASEKTVFLAVNKVDNNLMESDAQLFRKLGLSEPYFVSALDGRGVAELLDAVIAHIPEDDAPESDDTVKLTVIGRPNVGKSSFVNAILGQNRQIVTDIPGTTRDAVDSRFKRNGQDFLLIDTAGLRRKAKVDDNIELFSALRTEKAIERCDVAIILLDATQGLENQDLKVINAAAQKKRGMVIAVNKWDLIEKDDKTAIAYEKRLREELRNLSYVPLLFISALTKQRIYKAIDIAYQVWQNRRMKIDTSRLNNLMLNDIKRTPPSSKSGKEIKIKYLTQLATEPPLFGLFAGNPQLIEEHYKRFLERKLREHFGFEGTPIELKFRRK.

EngA-type G domains are found at residues 3–168 (PTVA…PEDD) and 176–351 (VKLT…QNRR). GTP is bound by residues 9-16 (GRPNVGKS), 56-60 (DTGGY), 120-123 (NKVD), 182-189 (GRPNVGKS), 229-233 (DTAGL), and 294-297 (NKWD). Residues 352-435 (MKIDTSRLNN…TPIELKFRRK (84 aa)) enclose the KH-like domain.

The protein belongs to the TRAFAC class TrmE-Era-EngA-EngB-Septin-like GTPase superfamily. EngA (Der) GTPase family. Associates with the 50S ribosomal subunit.

Its function is as follows. GTPase that plays an essential role in the late steps of ribosome biogenesis. The chain is GTPase Der from Chloroherpeton thalassium (strain ATCC 35110 / GB-78).